Here is a 267-residue protein sequence, read N- to C-terminus: Protein TIFY 7 (267 aa).

Positions S113–N148 constitute a Tify domain. A Jas motif is present at residues P220 to Y244. Residues A222–R229 carry the Nuclear localization signal motif.

The protein belongs to the TIFY/JAZ family. As to quaternary structure, homo- and heterodimer. Interacts with MYC2, MYC3, MYC4, COI1, AFPH2/NINJA, TIFY10A/JAZ1, TIFY10B/JAZ2, TIFY6B/JAZ3, TIFY5A/JAZ8, TIFY9/JAZ10 and TIFY3A/JAZ11. Interacts with RHD6 and RSL1. In terms of processing, ubiquitinated. Targeted for degradation by the SCF(COI1) E3 ubiquitin ligase-proteasome pathway during jasmonate signaling.

It is found in the nucleus. Repressor of jasmonate responses. Jasmonoyl-isoleucine (JA-Ile) specifically promotes COI1-TIFY7/JAZ9 interaction. Interacts with and suppresses RHD6 and RSL1 transcription factor activities to negatively regulate jasmonate-stimulated root hair development. The protein is Protein TIFY 7 (TIFY7) of Arabidopsis thaliana (Mouse-ear cress).